The following is a 45-amino-acid chain: Thymosin beta (45 aa).

Residues 1 to 45 (MADKPNMTEITSFDKTKLRKTETQEKNPLPTKETIEQERQGESTP) form a disordered region. Composition is skewed to basic and acidic residues over residues 12–25 (SFDK…ETQE) and 33–45 (ETIE…ESTP).

Belongs to the thymosin beta family.

The protein localises to the cytoplasm. The protein resides in the cytoskeleton. Plays an important role in the organization of the cytoskeleton. Binds to and sequesters actin monomers (G actin) and therefore inhibits actin polymerization. This chain is Thymosin beta (tmsb), found in Danio rerio (Zebrafish).